The following is a 199-amino-acid chain: Phosphatidylethanolamine N-methyltransferase (199 aa).

Residues 1 to 12 (MTRLLGYVDPLD) lie on the Lumenal side of the membrane. The segment at residues 13-33 (PSFVAAVITITFNPLYWNVVA) is an intramembrane region (helical). Residues 34–45 (RWEHKTRKLSRA) lie on the Lumenal side of the membrane. The chain crosses the membrane as a helical span at residues 46 to 66 (FGSPYLACYSLSVTILLLNFL). At 67–93 (RSHCFTQAMLSQPRMESLDTPAAYSLG) the chain is on the cytoplasmic side. Residues 94–114 (LALLGLGVVLVLSSFFALGFA) form a helical membrane-spanning segment. 98-100 (GLG) provides a ligand contact to S-adenosyl-L-methionine. Residues 115–157 (GTFLGDYFGILKEARVTVFPFNILDNPMYWGSTANYLGWAIMH) lie on the Lumenal side of the membrane. Residues 158–178 (ASPTGLLLTVLVALTYIVALL) form a helical membrane-spanning segment. At 179 to 199 (YEEPFTAEIYRQKASGSHKRS) the chain is on the cytoplasmic side. An S-adenosyl-L-methionine-binding site is contributed by 180–181 (EE).

It belongs to the class VI-like SAM-binding methyltransferase superfamily. PEMT/PEM2 methyltransferase family. Isoform 2 is N-glycosylated with high-mannose oligosaccharides. As to expression, primarily expressed in liver (at protein level).

The protein resides in the endoplasmic reticulum. It localises to the endoplasmic reticulum membrane. It is found in the mitochondrion membrane. It carries out the reaction a 1,2-diacyl-sn-glycero-3-phospho-N-methylethanolamine + S-adenosyl-L-methionine = a 1,2-diacyl-sn-glycero-3-phospho-N,N-dimethylethanolamine + S-adenosyl-L-homocysteine + H(+). The catalysed reaction is a 1,2-diacyl-sn-glycero-3-phospho-N,N-dimethylethanolamine + S-adenosyl-L-methionine = a 1,2-diacyl-sn-glycero-3-phosphocholine + S-adenosyl-L-homocysteine + H(+). The enzyme catalyses a 1,2-diacyl-sn-glycero-3-phosphoethanolamine + S-adenosyl-L-methionine = a 1,2-diacyl-sn-glycero-3-phospho-N-methylethanolamine + S-adenosyl-L-homocysteine + H(+). It catalyses the reaction 1,2-di-(9Z-octadecenoyl)-sn-glycero-3-phosphoethanolamine + S-adenosyl-L-methionine = 1,2-di-(9Z-octadecenoyl)-sn-glycero-3-phospho-N-methylethanolamine + S-adenosyl-L-homocysteine + H(+). It carries out the reaction 1,2-di-(9Z-octadecenoyl)-sn-glycero-3-phospho-N-methylethanolamine + S-adenosyl-L-methionine = 1,2-di-(9Z-octadecenoyl)-sn-glycero-3-phospho-N,N-dimethylethanolamine + S-adenosyl-L-homocysteine + H(+). The catalysed reaction is 1,2-di-(9Z-octadecenoyl)-sn-glycero-3-phospho-N,N-dimethylethanolamine + S-adenosyl-L-methionine = 1,2-di-(9Z-octadecenoyl)-sn-glycero-3-phosphocholine + S-adenosyl-L-homocysteine + H(+). The enzyme catalyses 1,2-di-(9Z,12Z-octadecadienoyl)-sn-glycero-3-phosphoethanolamine + S-adenosyl-L-methionine = 1,2-di-(9Z,12Z-octadecadienoyl)-sn-glycero-3-phospho-N-methylethanolamine + S-adenosyl-L-homocysteine + H(+). It catalyses the reaction 1,2-di-(9Z,12Z-octadecadienoyl)-sn-glycero-3-phospho-N-methylethanolamine + S-adenosyl-L-methionine = 1,2-di-(9Z,12Z-octadecadienoyl)-sn-glycero-3-phospho-N,N-dimethylethanolamine + S-adenosyl-L-homocysteine + H(+). It carries out the reaction 1,2-di-(9Z,12Z-octadecadienoyl)-sn-glycero-3-phospho-N,N-dimethylethanolamine + S-adenosyl-L-methionine = 1,2-di-(9Z,12Z-octadecadienoyl)-sn-glycero-3-phosphocholine + S-adenosyl-L-homocysteine + H(+). The catalysed reaction is 1,2-di-(9Z,12Z,15Z-octadecatrienoyl)-sn-glycero-3-phosphoethanolamine + S-adenosyl-L-methionine = 1,2-di-(9Z,12Z,15Z-octadecatrienoyl)-sn-glycero-3-phospho-N-methylethanolamine + S-adenosyl-L-homocysteine + H(+). The enzyme catalyses 1,2-di-(9Z,12Z,15Z-octadecatrienoyl)-sn-glycero-3-phospho-N-methylethanolamine + S-adenosyl-L-methionine = 1,2-di-(9Z,12Z,15Z-octadecatrienoyl)-sn-glycero-3-phospho-N,N-dimethylethanolamine + S-adenosyl-L-homocysteine + H(+). It catalyses the reaction 1,2-di-(9Z,12Z,15Z-octadecatrienoyl)-sn-glycero-3-phospho-N,N-dimethylethanolamine + S-adenosyl-L-methionine = 1,2-di-(9Z,12Z,15Z-octadecatrienoyl)-sn-glycero-3-phosphocholine + S-adenosyl-L-homocysteine + H(+). It carries out the reaction 1-hexadecanoyl-2-(4Z,7Z,10Z,13Z,16Z,19Z-docosahexaenoyl)-sn-glycero-3-phosphoethanolamine + S-adenosyl-L-methionine = 1-hexadecanoyl-2-(4Z,7Z,10Z,13Z,16Z,19Z-docosahexaenoyl)-sn-glycero-3-phospho-N-methylethanolamine + S-adenosyl-L-homocysteine + H(+). The catalysed reaction is 1-hexadecanoyl-2-(4Z,7Z,10Z,13Z,16Z,19Z-docosahexaenoyl)-sn-glycero-3-phospho-N-methylethanolamine + S-adenosyl-L-methionine = 1-hexadecanoyl-2-(4Z,7Z,10Z,13Z,16Z,19Z-docosahexaenoyl)-sn-glycero-3-phospho-N,N-dimethylethanolamine + S-adenosyl-L-homocysteine + H(+). The enzyme catalyses 1-hexadecanoyl-2-(4Z,7Z,10Z,13Z,16Z,19Z-docosahexaenoyl)-sn-glycero-3-phospho-N,N-dimethylethanolamine + S-adenosyl-L-methionine = 1-hexadecanoyl-2-(4Z,7Z,10Z,13Z,16Z,19Z-docosahexaenoyl)-sn-glycero-3-phosphocholine + S-adenosyl-L-homocysteine + H(+). It participates in phospholipid metabolism; phosphatidylcholine biosynthesis. With respect to regulation, the first methylation is rate-limiting. Catalyzes the three sequential steps of the methylation pathway for the biosynthesis of phosphatidylcholine, a critical and essential component for membrane structure. Uses S-adenosylmethionine (S-adenosyl-L-methionine, SAM or AdoMet) as the methyl group donor for the methylation of phosphatidylethanolamine (1,2-diacyl-sn-glycero-3-phosphoethanolamine, PE) to phosphatidylmonomethylethanolamine (1,2-diacyl-sn-glycero-3-phospho-N-methylethanolamine, PMME), PMME to phosphatidyldimethylethanolamine (1,2-diacyl-sn-glycero-3-phospho-N,N-dimethylethanolamine, PDME), and PDME to phosphatidylcholine (1,2-diacyl-sn-glycero-3-phosphocholine, PC), producing S-adenosyl-L-homocysteine in each step. Responsible for approximately 30% of hepatic PC with the CDP-choline pathway accounting for the other 70%. In terms of biological role, catalyzes the three sequential steps of the methylation of 1,2-diacyl-sn-glycero-3-phospho-N-methylethanolamine (PMME) to 1,2-diacyl-sn-glycero-3-phospho-N,N-dimethylethanolamine (PDME) more efficiently than isoform 2. Induces increase in PC species with longer polyunsaturated chains than isoform 2. Its function is as follows. Produces a higher increase in the level of PC species containing long chains with three double bonds than isoform 1. In Homo sapiens (Human), this protein is Phosphatidylethanolamine N-methyltransferase.